The primary structure comprises 85 residues: DNA-directed RNA polymerase subunit Rpo11 (85 aa).

Belongs to the archaeal Rpo11/eukaryotic RPB11/RPC19 RNA polymerase subunit family. Part of the RNA polymerase complex.

The protein localises to the cytoplasm. It carries out the reaction RNA(n) + a ribonucleoside 5'-triphosphate = RNA(n+1) + diphosphate. In terms of biological role, DNA-dependent RNA polymerase (RNAP) catalyzes the transcription of DNA into RNA using the four ribonucleoside triphosphates as substrates. This chain is DNA-directed RNA polymerase subunit Rpo11, found in Methanothermobacter thermautotrophicus (strain ATCC 29096 / DSM 1053 / JCM 10044 / NBRC 100330 / Delta H) (Methanobacterium thermoautotrophicum).